The following is a 471-amino-acid chain: Adenosylhomocysteinase (471 aa).

Threonine 60, aspartate 135, and glutamate 196 together coordinate substrate. 197–199 (TTT) provides a ligand contact to NAD(+). Substrate-binding residues include lysine 226 and aspartate 230. Residues asparagine 231, 260 to 265 (GYGDVG), glutamate 283, asparagine 318, 339 to 341 (IGH), and asparagine 387 each bind NAD(+).

The protein belongs to the adenosylhomocysteinase family. NAD(+) is required as a cofactor.

The protein localises to the cytoplasm. It catalyses the reaction S-adenosyl-L-homocysteine + H2O = L-homocysteine + adenosine. It functions in the pathway amino-acid biosynthesis; L-homocysteine biosynthesis; L-homocysteine from S-adenosyl-L-homocysteine: step 1/1. In terms of biological role, may play a key role in the regulation of the intracellular concentration of adenosylhomocysteine. The protein is Adenosylhomocysteinase of Pelodictyon phaeoclathratiforme (strain DSM 5477 / BU-1).